The sequence spans 150 residues: Regulatory protein RecX (150 aa).

This sequence belongs to the RecX family.

The protein resides in the cytoplasm. In terms of biological role, modulates RecA activity. This is Regulatory protein RecX from Ectopseudomonas mendocina (strain ymp) (Pseudomonas mendocina).